Consider the following 422-residue polypeptide: Serine hydroxymethyltransferase (422 aa).

(6S)-5,6,7,8-tetrahydrofolate is bound by residues L119 and 123–125 (GHL). K228 is modified (N6-(pyridoxal phosphate)lysine). (6S)-5,6,7,8-tetrahydrofolate-binding positions include E244 and 352-354 (SPF).

It belongs to the SHMT family. In terms of assembly, homodimer. The cofactor is pyridoxal 5'-phosphate.

The protein localises to the cytoplasm. It carries out the reaction (6R)-5,10-methylene-5,6,7,8-tetrahydrofolate + glycine + H2O = (6S)-5,6,7,8-tetrahydrofolate + L-serine. Its pathway is one-carbon metabolism; tetrahydrofolate interconversion. It functions in the pathway amino-acid biosynthesis; glycine biosynthesis; glycine from L-serine: step 1/1. Functionally, catalyzes the reversible interconversion of serine and glycine with tetrahydrofolate (THF) serving as the one-carbon carrier. This reaction serves as the major source of one-carbon groups required for the biosynthesis of purines, thymidylate, methionine, and other important biomolecules. Also exhibits THF-independent aldolase activity toward beta-hydroxyamino acids, producing glycine and aldehydes, via a retro-aldol mechanism. In Magnetococcus marinus (strain ATCC BAA-1437 / JCM 17883 / MC-1), this protein is Serine hydroxymethyltransferase.